We begin with the raw amino-acid sequence, 296 residues long: 4-hydroxybenzoate octaprenyltransferase (296 aa).

8 helical membrane-spanning segments follow: residues 28 to 48 (IGTLLLLWPTYWALWLASDGI), 51 to 71 (LAVLAAFTIGTFLMRSAGCVI), 102 to 122 (LLLTAFLCLLAALCLIPLNHL), 143 to 163 (FFPIPQLYLGLAFSFGIPMAF), 174 to 194 (AWILFTANVLWTLAYDTVYAM), 212 to 232 (FGRYDIAAVMLCHGGFTLLMA), 233 to 253 (VLGAVIGAAWAYWTAIPIVLL), and 274 to 294 (FLANNRIGWVWFTAIFAHTFF).

Belongs to the UbiA prenyltransferase family. Mg(2+) is required as a cofactor.

The protein resides in the cell inner membrane. The enzyme catalyses all-trans-octaprenyl diphosphate + 4-hydroxybenzoate = 4-hydroxy-3-(all-trans-octaprenyl)benzoate + diphosphate. It functions in the pathway cofactor biosynthesis; ubiquinone biosynthesis. Its function is as follows. Catalyzes the prenylation of para-hydroxybenzoate (PHB) with an all-trans polyprenyl group. Mediates the second step in the final reaction sequence of ubiquinone-8 (UQ-8) biosynthesis, which is the condensation of the polyisoprenoid side chain with PHB, generating the first membrane-bound Q intermediate 3-octaprenyl-4-hydroxybenzoate. In Neisseria meningitidis serogroup C (strain 053442), this protein is 4-hydroxybenzoate octaprenyltransferase.